Here is a 1030-residue protein sequence, read N- to C-terminus: Arrestin domain-containing protein F (1030 aa).

Disordered regions lie at residues Met-1–Arg-27 and Glu-119–Leu-154. Positions Asn-128–Thr-137 are enriched in acidic residues. Low complexity predominate over residues Asn-142–Asn-152. Coiled-coil stretches lie at residues His-320–Asn-374 and Gln-544–Gln-577. 2 disordered regions span residues Ser-539–Ser-572 and Asn-885–Asn-931. Positions Asn-547–Asp-562 are enriched in basic and acidic residues. Low complexity predominate over residues Ser-910–Asn-931.

It belongs to the arrestin family.

The chain is Arrestin domain-containing protein F (adcF) from Dictyostelium discoideum (Social amoeba).